Here is a 456-residue protein sequence, read N- to C-terminus: Serine--tRNA ligase (456 aa).

The interval H49–A69 is disordered. Position 241-243 (T241–E243) interacts with L-serine. ATP contacts are provided by residues R272–E274 and V288. An L-serine-binding site is contributed by E295. E368–S371 contacts ATP. An L-serine-binding site is contributed by S404.

The protein belongs to the class-II aminoacyl-tRNA synthetase family. Type-1 seryl-tRNA synthetase subfamily. As to quaternary structure, homodimer. The tRNA molecule binds across the dimer.

Its subcellular location is the cytoplasm. It carries out the reaction tRNA(Ser) + L-serine + ATP = L-seryl-tRNA(Ser) + AMP + diphosphate + H(+). The enzyme catalyses tRNA(Sec) + L-serine + ATP = L-seryl-tRNA(Sec) + AMP + diphosphate + H(+). The protein operates within aminoacyl-tRNA biosynthesis; selenocysteinyl-tRNA(Sec) biosynthesis; L-seryl-tRNA(Sec) from L-serine and tRNA(Sec): step 1/1. Functionally, catalyzes the attachment of serine to tRNA(Ser). Is also able to aminoacylate tRNA(Sec) with serine, to form the misacylated tRNA L-seryl-tRNA(Sec), which will be further converted into selenocysteinyl-tRNA(Sec). The sequence is that of Serine--tRNA ligase from Halorubrum lacusprofundi (strain ATCC 49239 / DSM 5036 / JCM 8891 / ACAM 34).